Consider the following 418-residue polypeptide: D-amino acid dehydrogenase (418 aa).

FAD is bound at residue 3 to 17 (VLILGSGVVGVATAY).

This sequence belongs to the DadA oxidoreductase family. FAD serves as cofactor.

The catalysed reaction is a D-alpha-amino acid + A + H2O = a 2-oxocarboxylate + AH2 + NH4(+). The protein operates within amino-acid degradation; D-alanine degradation; NH(3) and pyruvate from D-alanine: step 1/1. In terms of biological role, oxidative deamination of D-amino acids. This Granulibacter bethesdensis (strain ATCC BAA-1260 / CGDNIH1) protein is D-amino acid dehydrogenase.